A 313-amino-acid polypeptide reads, in one-letter code: Ribosomal protein L11 methyltransferase (313 aa).

Residues threonine 163, glycine 184, aspartate 206, and asparagine 249 each contribute to the S-adenosyl-L-methionine site.

This sequence belongs to the methyltransferase superfamily. PrmA family.

It is found in the cytoplasm. It carries out the reaction L-lysyl-[protein] + 3 S-adenosyl-L-methionine = N(6),N(6),N(6)-trimethyl-L-lysyl-[protein] + 3 S-adenosyl-L-homocysteine + 3 H(+). Methylates ribosomal protein L11. The chain is Ribosomal protein L11 methyltransferase from Brevibacillus brevis (strain 47 / JCM 6285 / NBRC 100599).